A 366-amino-acid chain; its full sequence is Peptide chain release factor 2 (366 aa).

Q253 carries the N5-methylglutamine modification.

The protein belongs to the prokaryotic/mitochondrial release factor family. In terms of processing, methylated by PrmC. Methylation increases the termination efficiency of RF2.

It localises to the cytoplasm. Peptide chain release factor 2 directs the termination of translation in response to the peptide chain termination codons UGA and UAA. The protein is Peptide chain release factor 2 of Yersinia pseudotuberculosis serotype I (strain IP32953).